The primary structure comprises 350 residues: Guanine nucleotide-binding protein G(t) subunit alpha-1 (350 aa).

A disordered region spans residues 1 to 21 (MGAGASAEEKHSRELEKKLKE). Gly-2 carries N-myristoyl glycine lipidation. Basic and acidic residues predominate over residues 7 to 21 (AEEKHSRELEKKLKE). One can recognise a G-alpha domain in the interval 28-350 (RTVKLLLLGA…KENLKDCGLF (323 aa)). The G1 motif stretch occupies residues 31–44 (KLLLLGAGESGKST). 36-43 (GAGESGKS) is a GTP binding site. Ser-43 lines the Mg(2+) pocket. Tyr-142 bears the Phosphotyrosine; by SRC mark. GTP is bound by residues Asp-146, 171-177 (LRSRVKT), Gly-199, 265-268 (NKKD), and Ala-322. A G2 motif region spans residues 169–177 (DVLRSRVKT). Arg-174 carries the ADP-ribosylarginine; by cholera toxin modification. Thr-177 contributes to the Mg(2+) binding site. The segment at 192-201 (FRMFDVGGQR) is G3 motif. A G4 motif region spans residues 261–268 (VLFLNKKD). The interval 320-325 (TCATDT) is G5 motif. The interaction with RHO stretch occupies residues 340–350 (IKENLKDCGLF). Cys-347 is modified (ADP-ribosylcysteine; by pertussis toxin).

This sequence belongs to the G-alpha family. G(i/o/t/z) subfamily. Heterotrimeric G proteins are composed of 3 subunits alpha, beta and gamma. The alpha chain contains the guanine nucleotide binding site. Interacts with RHO. Interacts with RGS9 and PDE6G. Interacts (when myristoylated) with UNC119; interaction is required for localization in sensory neurons. As to expression, rod photoreceptor cells. Predominantly expressed in the retina followed by the ciliary body, iris and retinal pigment epithelium.

It is found in the cell projection. Its subcellular location is the cilium. The protein localises to the photoreceptor outer segment. It localises to the membrane. The protein resides in the photoreceptor inner segment. Functionally, functions as a signal transducer for the rod photoreceptor RHO. Required for normal RHO-mediated light perception by the retina. Guanine nucleotide-binding proteins (G proteins) function as transducers downstream of G protein-coupled receptors (GPCRs), such as the photoreceptor RHO. The alpha chain contains the guanine nucleotide binding site and alternates between an active, GTP-bound state and an inactive, GDP-bound state. Activated RHO promotes GDP release and GTP binding. Signaling is mediated via downstream effector proteins, such as cGMP-phosphodiesterase. The polypeptide is Guanine nucleotide-binding protein G(t) subunit alpha-1 (GNAT1) (Homo sapiens (Human)).